A 484-amino-acid polypeptide reads, in one-letter code: F-box/LRR-repeat protein At3g59210 (484 aa).

One can recognise an F-box domain in the interval 6–54 (KDIINCLPDNLLCQILSNLSTKEAALTSLLSKRWRYLFALVPNLDFDVL). LRR repeat units lie at residues 144–170 (KIGP…NLDS), 172–197 (VFEE…SLLN), 205–234 (SCSV…SFDT), 303–334 (TLYL…TIES), and 335–360 (HPEL…VFQG).

This Arabidopsis thaliana (Mouse-ear cress) protein is F-box/LRR-repeat protein At3g59210.